Consider the following 382-residue polypeptide: Carbamoyl phosphate synthase small chain (382 aa).

The tract at residues 1–189 (MIKSALLVLE…ELPAAKNESE (189 aa)) is CPSase. The L-glutamine site is built by Ser47, Gly241, and Gly243. The 188-residue stretch at 193-380 (HVVAYDYGVK…IDLIQTYRSS (188 aa)) folds into the Glutamine amidotransferase type-1 domain. Catalysis depends on Cys269, which acts as the Nucleophile. Positions 270, 273, 311, 313, and 314 each coordinate L-glutamine. Catalysis depends on residues His353 and Glu355.

The protein belongs to the CarA family. As to quaternary structure, composed of two chains; the small (or glutamine) chain promotes the hydrolysis of glutamine to ammonia, which is used by the large (or ammonia) chain to synthesize carbamoyl phosphate. Tetramer of heterodimers (alpha,beta)4.

It catalyses the reaction hydrogencarbonate + L-glutamine + 2 ATP + H2O = carbamoyl phosphate + L-glutamate + 2 ADP + phosphate + 2 H(+). The enzyme catalyses L-glutamine + H2O = L-glutamate + NH4(+). The protein operates within amino-acid biosynthesis; L-arginine biosynthesis; carbamoyl phosphate from bicarbonate: step 1/1. It functions in the pathway pyrimidine metabolism; UMP biosynthesis via de novo pathway; (S)-dihydroorotate from bicarbonate: step 1/3. Its function is as follows. Small subunit of the glutamine-dependent carbamoyl phosphate synthetase (CPSase). CPSase catalyzes the formation of carbamoyl phosphate from the ammonia moiety of glutamine, carbonate, and phosphate donated by ATP, constituting the first step of 2 biosynthetic pathways, one leading to arginine and/or urea and the other to pyrimidine nucleotides. The small subunit (glutamine amidotransferase) binds and cleaves glutamine to supply the large subunit with the substrate ammonia. This is Carbamoyl phosphate synthase small chain from Pectobacterium atrosepticum (strain SCRI 1043 / ATCC BAA-672) (Erwinia carotovora subsp. atroseptica).